Consider the following 493-residue polypeptide: Acetylcholine receptor subunit beta-type unc-29 (493 aa).

Positions 1–26 are cleaved as a signal peptide; the sequence is MRTNRLSWILVLSVVIFLVIINTINA. N25 and N50 each carry an N-linked (GlcNAc...) asparagine glycan. Over 27-232 the chain is Extracellular; sequence SDDEERLMVD…QVRIRRKTLF (206 aa). A disulfide bond links C155 and C169. Helical transmembrane passes span 233–254, 262–280, and 296–317; these read YTVV…VFFL, ITLT…LLVS, and YLLL…IINV. The Cytoplasmic segment spans residues 318-445; the sequence is YFRGPRTHRM…WKYVAMIIDR (128 aa). Residues 446 to 466 form a helical membrane-spanning segment; sequence LLLYVFFGITVGGTCGILFSA.

This sequence belongs to the ligand-gated ion channel (TC 1.A.9) family. Acetylcholine receptor (TC 1.A.9.1) subfamily. Interacts with lev-1. Component of nicotinic acetylcholine receptor composed of 2 non-alpha subunits lev-1 and unc-29, and 3 alpha subunits unc-38, unc-63 and lev-8. Interacts with oig-4. Interacts with crld-1.

It is found in the postsynaptic cell membrane. Its subcellular location is the cell membrane. Non-alpha subunit of nicotinic acetylcholine receptor (nAChR). Involved in nAChR sensitivity to nicotine and levasimole. This is Acetylcholine receptor subunit beta-type unc-29 from Caenorhabditis elegans.